The primary structure comprises 322 residues: Biotin synthase (322 aa).

The Radical SAM core domain occupies 39 to 266 (NQIQVSSLLN…KSVVRLSAGR (228 aa)). 3 residues coordinate [4Fe-4S] cluster: C54, C58, and C61. 4 residues coordinate [2Fe-2S] cluster: C98, C129, C189, and R261.

This sequence belongs to the radical SAM superfamily. Biotin synthase family. In terms of assembly, homodimer. It depends on [4Fe-4S] cluster as a cofactor. The cofactor is [2Fe-2S] cluster.

The enzyme catalyses (4R,5S)-dethiobiotin + (sulfur carrier)-SH + 2 reduced [2Fe-2S]-[ferredoxin] + 2 S-adenosyl-L-methionine = (sulfur carrier)-H + biotin + 2 5'-deoxyadenosine + 2 L-methionine + 2 oxidized [2Fe-2S]-[ferredoxin]. It functions in the pathway cofactor biosynthesis; biotin biosynthesis; biotin from 7,8-diaminononanoate: step 2/2. Its function is as follows. Catalyzes the conversion of dethiobiotin (DTB) to biotin by the insertion of a sulfur atom into dethiobiotin via a radical-based mechanism. The chain is Biotin synthase from Ruthia magnifica subsp. Calyptogena magnifica.